The chain runs to 353 residues: Thiamine-phosphate synthase (353 aa).

Residues 1 to 128 (MKSMPVAPIA…AASAAAIRYG (128 aa)) form a unknown region. Residues 129-353 (LYDLEVTVLQ…TSLQLLEALR (225 aa)) form a thiamine-phosphate synthase region. Residues 185–189 (QYRNK) and N217 each bind 4-amino-2-methyl-5-(diphosphooxymethyl)pyrimidine. D218 and D237 together coordinate Mg(2+). S256 contributes to the 4-amino-2-methyl-5-(diphosphooxymethyl)pyrimidine binding site. Position 282-284 (282-284 (TAT)) interacts with 2-[(2R,5Z)-2-carboxy-4-methylthiazol-5(2H)-ylidene]ethyl phosphate. K285 serves as a coordination point for 4-amino-2-methyl-5-(diphosphooxymethyl)pyrimidine. G312 is a binding site for 2-[(2R,5Z)-2-carboxy-4-methylthiazol-5(2H)-ylidene]ethyl phosphate.

It belongs to the thiamine-phosphate synthase family. Requires Mg(2+) as cofactor.

It carries out the reaction 2-[(2R,5Z)-2-carboxy-4-methylthiazol-5(2H)-ylidene]ethyl phosphate + 4-amino-2-methyl-5-(diphosphooxymethyl)pyrimidine + 2 H(+) = thiamine phosphate + CO2 + diphosphate. The enzyme catalyses 2-(2-carboxy-4-methylthiazol-5-yl)ethyl phosphate + 4-amino-2-methyl-5-(diphosphooxymethyl)pyrimidine + 2 H(+) = thiamine phosphate + CO2 + diphosphate. It catalyses the reaction 4-methyl-5-(2-phosphooxyethyl)-thiazole + 4-amino-2-methyl-5-(diphosphooxymethyl)pyrimidine + H(+) = thiamine phosphate + diphosphate. It participates in cofactor biosynthesis; thiamine diphosphate biosynthesis; thiamine phosphate from 4-amino-2-methyl-5-diphosphomethylpyrimidine and 4-methyl-5-(2-phosphoethyl)-thiazole: step 1/1. Functionally, condenses 4-methyl-5-(beta-hydroxyethyl)thiazole monophosphate (THZ-P) and 2-methyl-4-amino-5-hydroxymethyl pyrimidine pyrophosphate (HMP-PP) to form thiamine monophosphate (TMP). The sequence is that of Thiamine-phosphate synthase from Prochlorococcus marinus (strain MIT 9303).